Consider the following 220-residue polypeptide: Endonuclease NucS (220 aa).

It belongs to the NucS endonuclease family.

It localises to the cytoplasm. Its function is as follows. Cleaves both 3' and 5' ssDNA extremities of branched DNA structures. The polypeptide is Endonuclease NucS (Parafrankia sp. (strain EAN1pec)).